A 90-amino-acid polypeptide reads, in one-letter code: uncharacterized protein (90 aa).

This is an uncharacterized protein from Treponema pallidum (strain Nichols).